An 81-amino-acid polypeptide reads, in one-letter code: Small ribosomal subunit protein bS18 (81 aa).

Belongs to the bacterial ribosomal protein bS18 family. Part of the 30S ribosomal subunit. Forms a tight heterodimer with protein bS6.

Binds as a heterodimer with protein bS6 to the central domain of the 16S rRNA, where it helps stabilize the platform of the 30S subunit. The chain is Small ribosomal subunit protein bS18 from Parvibaculum lavamentivorans (strain DS-1 / DSM 13023 / NCIMB 13966).